A 412-amino-acid chain; its full sequence is Multifunctional CCA protein (412 aa).

ATP contacts are provided by glycine 8 and arginine 11. CTP is bound by residues glycine 8 and arginine 11. Mg(2+) contacts are provided by aspartate 21 and aspartate 23. Residues arginine 91, arginine 137, and arginine 140 each coordinate ATP. Residues arginine 91, arginine 137, and arginine 140 each contribute to the CTP site. The region spanning 228-329 (TGIHTLMTLS…VKLFDSIDAW (102 aa)) is the HD domain.

It belongs to the tRNA nucleotidyltransferase/poly(A) polymerase family. Bacterial CCA-adding enzyme type 1 subfamily. As to quaternary structure, monomer. Can also form homodimers and oligomers. Mg(2+) is required as a cofactor. Requires Ni(2+) as cofactor.

The catalysed reaction is a tRNA precursor + 2 CTP + ATP = a tRNA with a 3' CCA end + 3 diphosphate. It carries out the reaction a tRNA with a 3' CCA end + 2 CTP + ATP = a tRNA with a 3' CCACCA end + 3 diphosphate. In terms of biological role, catalyzes the addition and repair of the essential 3'-terminal CCA sequence in tRNAs without using a nucleic acid template. Adds these three nucleotides in the order of C, C, and A to the tRNA nucleotide-73, using CTP and ATP as substrates and producing inorganic pyrophosphate. tRNA 3'-terminal CCA addition is required both for tRNA processing and repair. Also involved in tRNA surveillance by mediating tandem CCA addition to generate a CCACCA at the 3' terminus of unstable tRNAs. While stable tRNAs receive only 3'-terminal CCA, unstable tRNAs are marked with CCACCA and rapidly degraded. This chain is Multifunctional CCA protein, found in Escherichia coli O8 (strain IAI1).